We begin with the raw amino-acid sequence, 1178 residues long: DNA-directed RNA polymerase subunit beta (1178 aa).

The protein belongs to the RNA polymerase beta chain family. As to quaternary structure, the RNAP catalytic core consists of 2 alpha, 1 beta, 1 beta' and 1 omega subunit. When a sigma factor is associated with the core the holoenzyme is formed, which can initiate transcription.

It catalyses the reaction RNA(n) + a ribonucleoside 5'-triphosphate = RNA(n+1) + diphosphate. In terms of biological role, DNA-dependent RNA polymerase catalyzes the transcription of DNA into RNA using the four ribonucleoside triphosphates as substrates. The polypeptide is DNA-directed RNA polymerase subunit beta (Treponema pallidum (strain Nichols)).